The chain runs to 188 residues: UPF0157 protein DR_2534 (188 aa).

Gly residues predominate over residues 1–12 (MGRGGRGVGGGR). A disordered region spans residues 1–37 (MGRGGRGVGGGRPEGHGASVEGGRTRQTEGMDLISPD).

It belongs to the UPF0157 (GrpB) family.

This Deinococcus radiodurans (strain ATCC 13939 / DSM 20539 / JCM 16871 / CCUG 27074 / LMG 4051 / NBRC 15346 / NCIMB 9279 / VKM B-1422 / R1) protein is UPF0157 protein DR_2534.